The following is a 282-amino-acid chain: Extent of cell elongation protein 1 (282 aa).

Residues 1 to 18 (MKFSKVASFAFLALSSQA) form the signal peptide. The helical transmembrane segment at 68-92 (ISFAGIVSSIINQLPSIIQIIGNII) threads the bilayer.

It is found in the secreted. The protein resides in the host cell membrane. Its function is as follows. Secreted protein cleaved by KEX2 in 8 similar peptides (ECE1-I to ECE1-VIII). Stimulates biofilm formation. In terms of biological role, acts as a cytolytic peptide toxin that directly damages host epithelial membranes, triggers a danger response signaling pathway and activates epithelial immunity. Probably acts similarly to cationic antimicrobial peptide toxins, inducing lesions after binding to target cell membranes and causing an inward current associated with calcium influx. The chain is Extent of cell elongation protein 1 from Candida tropicalis (strain ATCC MYA-3404 / T1) (Yeast).